Reading from the N-terminus, the 296-residue chain is NAD kinase (296 aa).

D72 serves as the catalytic Proton acceptor. NAD(+) is bound by residues 72–73, 146–147, R157, K174, D176, 187–192, and Q247; these read DG, ND, and TAYALS.

This sequence belongs to the NAD kinase family. A divalent metal cation is required as a cofactor.

It is found in the cytoplasm. It carries out the reaction NAD(+) + ATP = ADP + NADP(+) + H(+). Involved in the regulation of the intracellular balance of NAD and NADP, and is a key enzyme in the biosynthesis of NADP. Catalyzes specifically the phosphorylation on 2'-hydroxyl of the adenosine moiety of NAD to yield NADP. This is NAD kinase from Pseudomonas fluorescens (strain Pf0-1).